Here is a 205-residue protein sequence, read N- to C-terminus: Thymidylate kinase (205 aa).

10–17 provides a ligand contact to ATP; it reads GLEGAGKS.

The protein belongs to the thymidylate kinase family.

It catalyses the reaction dTMP + ATP = dTDP + ADP. Phosphorylation of dTMP to form dTDP in both de novo and salvage pathways of dTTP synthesis. This chain is Thymidylate kinase, found in Idiomarina loihiensis (strain ATCC BAA-735 / DSM 15497 / L2-TR).